A 776-amino-acid polypeptide reads, in one-letter code: Serine/threonine-protein kinase-like protein CCR2 (776 aa).

Positions 1–22 (MQPNSHIFVIITISSLIITVSA) are cleaved as a signal peptide. The Extracellular portion of the chain corresponds to 23–432 (YGSTGTIAAA…QKEQREVRRL (410 aa)). 8 N-linked (GlcNAc...) asparagine glycosylation sites follow: N59, N92, N154, N162, N205, N278, N287, and N350. The stretch at 341–396 (NCGDGWFAFNASILKESELTSLCSFHNLNICLRCGISCLEGYFPSSTCNPNADRVC) is one TNFR-Cys repeat. 3 cysteine pairs are disulfide-bonded: C342–C371, C374–C388, and C378–C396. N404 carries an N-linked (GlcNAc...) asparagine glycan. Residues 433–453 (VIIIGCSVLGFLVMLIGLSFI) traverse the membrane as a helical segment. Topologically, residues 454 to 776 (PKMTKGSKRD…DLIVKSGLTF (323 aa)) are cytoplasmic. The region spanning 519–776 (FKEFNELGRG…DLIVKSGLTF (258 aa)) is the Protein kinase domain. ATP contacts are provided by residues 525–533 (LGRGSFGFV) and K547. D644 acts as the Proton acceptor in catalysis.

The protein belongs to the protein kinase superfamily. Ser/Thr protein kinase family. In terms of assembly, homodimer. Expressed in roots, leaves, shoot apical meristems (SAM), and floral buds.

It is found in the membrane. The catalysed reaction is L-seryl-[protein] + ATP = O-phospho-L-seryl-[protein] + ADP + H(+). It catalyses the reaction L-threonyl-[protein] + ATP = O-phospho-L-threonyl-[protein] + ADP + H(+). Functionally, serine/threonine-protein kinase with low activity. The chain is Serine/threonine-protein kinase-like protein CCR2 (CCR2) from Arabidopsis thaliana (Mouse-ear cress).